A 403-amino-acid polypeptide reads, in one-letter code: Alkaline protease 1 (403 aa).

The N-terminal stretch at 1–21 is a signal peptide; sequence MQSIKRTLLLLGALLPAALAA. Positions 22-125 are excised as a propeptide; it reads PAREPHPSSN…QIWYLDALTT (104 aa). Positions 36–120 constitute an Inhibitor I9 domain; it reads KYIITFKSGI…HVEEDQIWYL (85 aa). Residues 130 to 403 enclose the Peptidase S8 domain; it reads PWGLGSISHK…PNKLAYNGAA (274 aa). Residues Asp-162 and His-193 each act as charge relay system in the active site. 2 N-linked (GlcNAc...) asparagine glycosylation sites follow: Asn-253 and Asn-307. The Charge relay system role is filled by Ser-349.

It belongs to the peptidase S8 family.

It is found in the secreted. It catalyses the reaction Hydrolysis of proteins with broad specificity, and of Bz-Arg-OEt &gt; Ac-Tyr-OEt. Does not hydrolyze peptide amides.. In terms of biological role, secreted alkaline protease that allows assimilation of proteinaceous substrates. In Aspergillus clavatus (strain ATCC 1007 / CBS 513.65 / DSM 816 / NCTC 3887 / NRRL 1 / QM 1276 / 107), this protein is Alkaline protease 1 (alp1).